Consider the following 327-residue polypeptide: tRNA N6-adenosine threonylcarbamoyltransferase (327 aa).

2 residues coordinate Fe cation: His107 and His111. Substrate is bound by residues 129-133, Asp162, Gly175, and Asn263; that span reads LVSGG. Residue Asp291 coordinates Fe cation.

The protein belongs to the KAE1 / TsaD family. Fe(2+) is required as a cofactor.

It localises to the cytoplasm. It carries out the reaction L-threonylcarbamoyladenylate + adenosine(37) in tRNA = N(6)-L-threonylcarbamoyladenosine(37) in tRNA + AMP + H(+). Required for the formation of a threonylcarbamoyl group on adenosine at position 37 (t(6)A37) in tRNAs that read codons beginning with adenine. Is involved in the transfer of the threonylcarbamoyl moiety of threonylcarbamoyl-AMP (TC-AMP) to the N6 group of A37, together with TsaE and TsaB. TsaD likely plays a direct catalytic role in this reaction. The chain is tRNA N6-adenosine threonylcarbamoyltransferase from Nautilia profundicola (strain ATCC BAA-1463 / DSM 18972 / AmH).